A 268-amino-acid chain; its full sequence is Undecaprenyl-diphosphatase (268 aa).

Helical transmembrane passes span 5–25 (SIIS…IPVS), 43–63 (GNTF…LVYF), 84–104 (FSVL…HGFI), 107–127 (VLFE…IILY), 184–204 (AAEF…ALDL), 213–233 (FDDV…GIFV), and 248–268 (PFAI…WLLG).

This sequence belongs to the UppP family.

Its subcellular location is the cell inner membrane. It catalyses the reaction di-trans,octa-cis-undecaprenyl diphosphate + H2O = di-trans,octa-cis-undecaprenyl phosphate + phosphate + H(+). Catalyzes the dephosphorylation of undecaprenyl diphosphate (UPP). Confers resistance to bacitracin. This Rhizobium meliloti (strain 1021) (Ensifer meliloti) protein is Undecaprenyl-diphosphatase.